The sequence spans 187 residues: Ribosome-recycling factor (187 aa).

Belongs to the RRF family.

Its subcellular location is the cytoplasm. Functionally, responsible for the release of ribosomes from messenger RNA at the termination of protein biosynthesis. May increase the efficiency of translation by recycling ribosomes from one round of translation to another. This Methylobacterium sp. (strain 4-46) protein is Ribosome-recycling factor.